The following is a 320-amino-acid chain: Lipoyl synthase (320 aa).

Positions 1-11 (MGGMNDLSSTP) are enriched in polar residues. The disordered stretch occupies residues 1 to 24 (MGGMNDLSSTPAPEGDRPARQRKP). The span at 14 to 24 (EGDRPARQRKP) shows a compositional bias: basic and acidic residues. 7 residues coordinate [4Fe-4S] cluster: C53, C58, C64, C79, C83, C86, and S293. A Radical SAM core domain is found at 65–282 (WTKKHATVMI…GAIARAKGFL (218 aa)).

Belongs to the radical SAM superfamily. Lipoyl synthase family. The cofactor is [4Fe-4S] cluster.

It is found in the cytoplasm. The enzyme catalyses [[Fe-S] cluster scaffold protein carrying a second [4Fe-4S](2+) cluster] + N(6)-octanoyl-L-lysyl-[protein] + 2 oxidized [2Fe-2S]-[ferredoxin] + 2 S-adenosyl-L-methionine + 4 H(+) = [[Fe-S] cluster scaffold protein] + N(6)-[(R)-dihydrolipoyl]-L-lysyl-[protein] + 4 Fe(3+) + 2 hydrogen sulfide + 2 5'-deoxyadenosine + 2 L-methionine + 2 reduced [2Fe-2S]-[ferredoxin]. It participates in protein modification; protein lipoylation via endogenous pathway; protein N(6)-(lipoyl)lysine from octanoyl-[acyl-carrier-protein]: step 2/2. In terms of biological role, catalyzes the radical-mediated insertion of two sulfur atoms into the C-6 and C-8 positions of the octanoyl moiety bound to the lipoyl domains of lipoate-dependent enzymes, thereby converting the octanoylated domains into lipoylated derivatives. The chain is Lipoyl synthase from Erythrobacter litoralis (strain HTCC2594).